Consider the following 281-residue polypeptide: Homeobox protein Hox-A5 (281 aa).

2 disordered regions span residues 65-144 (VGNE…PCSS) and 162-183 (PLEEEKPAGSAPTTPQNVSDST). Composition is skewed to polar residues over residues 68–99 (ERTQGYSPSHSAATTPSVEPVRYTQSANSTGT) and 114–127 (VASSSPVTETQSQH). Over residues 132 to 144 (NSITTPCSTPCSS) the composition is skewed to low complexity. The segment covering 172 to 183 (APTTPQNVSDST) has biased composition (polar residues). An Antp-type hexapeptide motif is present at residues 187–192 (IYPWMR). The segment at residues 205 to 264 (GKRARTAYTRYQTLELEKEFHFNRYLTRRRRIEIAHALCLSERQIKIWFQNRRMKWKKDN) is a DNA-binding region (homeobox).

The protein belongs to the Antp homeobox family.

The protein resides in the nucleus. Functionally, sequence-specific transcription factor which is part of a developmental regulatory system that provides cells with specific positional identities on the anterior-posterior axis. The protein is Homeobox protein Hox-A5 (hoxa5) of Morone saxatilis (Striped bass).